The following is a 161-amino-acid chain: MTVGIIMGSKSDWPTMKHAAEMLDQFGVAYETKVVSAHRTPHLLADYASSAKERGLQVIIAGAGGAAHLPGMTAAFTSLPVLGVPVQSRALSGLDSLYSIVQMPKGIAVGTLAIGEAGAANAGLLAAQIIGIHNPEVMSKVEAFRAKQTQSVLDNPNPAEE.

Substrate contacts are provided by Ser9, Asp12, and Arg39.

Belongs to the AIR carboxylase family. Class I subfamily.

It catalyses the reaction 5-carboxyamino-1-(5-phospho-D-ribosyl)imidazole + H(+) = 5-amino-1-(5-phospho-D-ribosyl)imidazole-4-carboxylate. Its pathway is purine metabolism; IMP biosynthesis via de novo pathway; 5-amino-1-(5-phospho-D-ribosyl)imidazole-4-carboxylate from 5-amino-1-(5-phospho-D-ribosyl)imidazole (N5-CAIR route): step 2/2. Catalyzes the conversion of N5-carboxyaminoimidazole ribonucleotide (N5-CAIR) to 4-carboxy-5-aminoimidazole ribonucleotide (CAIR). The protein is N5-carboxyaminoimidazole ribonucleotide mutase of Vibrio cholerae serotype O1 (strain ATCC 39315 / El Tor Inaba N16961).